Consider the following 631-residue polypeptide: 1-deoxy-D-xylulose-5-phosphate synthase (631 aa).

Thiamine diphosphate-binding positions include H73 and 114–116; that span reads GHS. Residue D145 participates in Mg(2+) binding. Thiamine diphosphate-binding positions include 146–147, N174, Y285, and E366; that span reads GA. N174 is a binding site for Mg(2+).

The protein belongs to the transketolase family. DXPS subfamily. Homodimer. Mg(2+) serves as cofactor. It depends on thiamine diphosphate as a cofactor.

The catalysed reaction is D-glyceraldehyde 3-phosphate + pyruvate + H(+) = 1-deoxy-D-xylulose 5-phosphate + CO2. The protein operates within metabolic intermediate biosynthesis; 1-deoxy-D-xylulose 5-phosphate biosynthesis; 1-deoxy-D-xylulose 5-phosphate from D-glyceraldehyde 3-phosphate and pyruvate: step 1/1. Its function is as follows. Catalyzes the acyloin condensation reaction between C atoms 2 and 3 of pyruvate and glyceraldehyde 3-phosphate to yield 1-deoxy-D-xylulose-5-phosphate (DXP). The sequence is that of 1-deoxy-D-xylulose-5-phosphate synthase from Desulfitobacterium hafniense (strain Y51).